Here is a 90-residue protein sequence, read N- to C-terminus: Acylphosphatase (90 aa).

In terms of domain architecture, Acylphosphatase-like spans 3 to 90 (NYKIIVFGTV…KTYNDFSVTY (88 aa)). Active-site residues include arginine 18 and asparagine 36.

The protein belongs to the acylphosphatase family.

The enzyme catalyses an acyl phosphate + H2O = a carboxylate + phosphate + H(+). This Ligilactobacillus salivarius (strain UCC118) (Lactobacillus salivarius) protein is Acylphosphatase (acyP).